Here is a 657-residue protein sequence, read N- to C-terminus: Zinc transporter ZIP4 (657 aa).

The N-terminal stretch at 1 to 22 is a signal peptide; it reads MMLPKSLTQGLLLAMLVGTAAM. The Extracellular segment spans residues 23–335; the sequence is VQPYHLLSLL…QDQLSQAERY (313 aa). 3 N-linked (GlcNAc...) asparagine glycosylation sites follow: asparagine 193, asparagine 220, and asparagine 268. A helical transmembrane segment spans residues 336 to 356; it reads LYGSLATLLICLCAVFGLLLL. At 357-374 the chain is on the cytoplasmic side; sequence TCAKCSTATHYIMQTFLS. Residues 375–395 traverse the membrane as a helical segment; sequence LAVGALTGDALLHLIPKVLGL. Residues 396-417 lie on the Extracellular side of the membrane; it reads HTHSGEVHSHEEESIGGQSTWR. The chain crosses the membrane as a helical span at residues 418–438; sequence LLAVLGGFYIFFLFESFFNLL. Residues 439–508 are Cytoplasmic-facing; that stretch reads LPRDQDHEKD…LRAELRMLPY (70 aa). Residues 462–464 carry the Essential for SLC39A4 endocytosis motif; that stretch reads LQL. Residues 467–491 are disordered; sequence SNLRQSKQPHESSRSDLVTEETPEL. The helical transmembrane segment at 509 to 528 threads the bilayer; sequence LITLGDAVHNFADGLAVGAA. Residues histidine 517, asparagine 518, and aspartate 521 each contribute to the Zn(2+) site. Residues 529 to 536 are Extracellular-facing; the sequence is FSSTWKTG. The helical transmembrane segment at 537–563 threads the bilayer; the sequence is LATSLAVFCHELPHELGDFAALLHAGL. The Zn(2+) site is built by histidine 546, glutamate 547, and histidine 550. The Cytoplasmic segment spans residues 564 to 568; the sequence is TVKRA. Residues 569 to 589 form a helical membrane-spanning segment; it reads LLLNLASALTAFAGLYVALAV. Over 590–597 the chain is Extracellular; it reads GVGEEGET. The helical transmembrane segment at 598–618 threads the bilayer; that stretch reads WILAVATGLFLYVALCDMLPA. Topologically, residues 619-627 are cytoplasmic; it reads MMNVRDQRP. A helical transmembrane segment spans residues 628–648; the sequence is WLLFLLHNVGLLGGWTILLLL. Residues 649–657 are Extracellular-facing; sequence SLYEDSITF.

The protein belongs to the ZIP transporter (TC 2.A.5) family. Homodimer; homodimerization is mediated by the transmembrane domain. The extracellular N-terminal ectodomain is cleaved when cells are Zn(2+) deficient, N-terminally cleaved SLC39A4 is internalized at a faster rate. In terms of processing, under excess Zn(2+) conditions, SLC39A4 on the cell surface is rapidly endocytosed, ubiquitinated and degraded. Post-translationally, glycosylated. Expressed in duodenum, jejunum, and ileum.

The protein resides in the cell membrane. It localises to the recycling endosome membrane. Its subcellular location is the apical cell membrane. The catalysed reaction is Zn(2+)(in) = Zn(2+)(out). In terms of biological role, selective transporter that mediates the uptake of Zn(2+). Plays an essential role for dietary zinc uptake from small intestine. The Zn(2+) uniporter activity is regulated by zinc availability. Also exhibits polyspecific binding and transport of Cu(2+), Cd(2+) and possibly Ni(2+) but at higher concentrations. In Rattus norvegicus (Rat), this protein is Zinc transporter ZIP4 (Slc39a4).